Consider the following 382-residue polypeptide: 26S proteasome non-ATPase regulatory subunit 6 (382 aa).

The PCI domain occupies 186–354; sequence QFKEASDLYL…GVIETTRSDA (169 aa).

This sequence belongs to the proteasome subunit S10 family.

Functionally, acts as a regulatory subunit of the 26S proteasome which is involved in the ATP-dependent degradation of ubiquitinated proteins. The sequence is that of 26S proteasome non-ATPase regulatory subunit 6 (psmD6) from Dictyostelium discoideum (Social amoeba).